Consider the following 372-residue polypeptide: Alanine dehydrogenase 1 (372 aa).

H94 is a catalytic residue. Residue T170–N200 coordinates NAD(+).

The protein belongs to the AlaDH/PNT family.

It catalyses the reaction L-alanine + NAD(+) + H2O = pyruvate + NH4(+) + NADH + H(+). It functions in the pathway amino-acid degradation; L-alanine degradation via dehydrogenase pathway; NH(3) and pyruvate from L-alanine: step 1/1. Its function is as follows. May play a role in cell wall synthesis as L-alanine is an important constituent of the peptidoglycan layer. The sequence is that of Alanine dehydrogenase 1 (ald1) from Staphylococcus aureus (strain MRSA252).